A 430-amino-acid chain; its full sequence is Glucose-1-phosphate adenylyltransferase (430 aa).

Residues glycine 163, 178–179 (EK), and serine 210 each bind alpha-D-glucose 1-phosphate.

The protein belongs to the bacterial/plant glucose-1-phosphate adenylyltransferase family. In terms of assembly, homotetramer.

The catalysed reaction is alpha-D-glucose 1-phosphate + ATP + H(+) = ADP-alpha-D-glucose + diphosphate. The protein operates within glycan biosynthesis; glycogen biosynthesis. In terms of biological role, involved in the biosynthesis of ADP-glucose, a building block required for the elongation reactions to produce glycogen. Catalyzes the reaction between ATP and alpha-D-glucose 1-phosphate (G1P) to produce pyrophosphate and ADP-Glc. The sequence is that of Glucose-1-phosphate adenylyltransferase from Synechococcus elongatus (strain ATCC 33912 / PCC 7942 / FACHB-805) (Anacystis nidulans R2).